The primary structure comprises 230 residues: 2,3-bisphosphoglycerate-dependent phosphoglycerate mutase (230 aa).

Residues 8 to 15, 21 to 22, Arg60, 87 to 90, Lys98, 114 to 115, and 183 to 184 each bind substrate; these read RHGESEWN, TG, ERHY, RR, and GN. His9 acts as the Tele-phosphohistidine intermediate in catalysis. Glu87 (proton donor/acceptor) is an active-site residue.

It belongs to the phosphoglycerate mutase family. BPG-dependent PGAM subfamily.

It catalyses the reaction (2R)-2-phosphoglycerate = (2R)-3-phosphoglycerate. It functions in the pathway carbohydrate degradation; glycolysis; pyruvate from D-glyceraldehyde 3-phosphate: step 3/5. Functionally, catalyzes the interconversion of 2-phosphoglycerate and 3-phosphoglycerate. This is 2,3-bisphosphoglycerate-dependent phosphoglycerate mutase from Streptococcus agalactiae serotype Ia (strain ATCC 27591 / A909 / CDC SS700).